A 274-amino-acid polypeptide reads, in one-letter code: Large ribosomal subunit protein uL2 (274 aa).

Disordered stretches follow at residues 30–54 and 223–274; these read EKSLAFGKKSSGGRNNNGRITIRHK and VAMN…QLKG. Low complexity predominate over residues 36–48; that stretch reads GKKSSGGRNNNGR. The segment covering 263–274 has biased composition (basic and acidic residues); that stretch reads KFSDKYIKQLKG.

It belongs to the universal ribosomal protein uL2 family. In terms of assembly, part of the 50S ribosomal subunit. Forms a bridge to the 30S subunit in the 70S ribosome.

Its function is as follows. One of the primary rRNA binding proteins. Required for association of the 30S and 50S subunits to form the 70S ribosome, for tRNA binding and peptide bond formation. It has been suggested to have peptidyltransferase activity; this is somewhat controversial. Makes several contacts with the 16S rRNA in the 70S ribosome. The polypeptide is Large ribosomal subunit protein uL2 (Wolbachia sp. subsp. Brugia malayi (strain TRS)).